A 318-amino-acid chain; its full sequence is MIKKRNTTKISVIGAGSVGATTAYALMLSGVATEIVLVDVNKSKTEGEAMDLSHGADFVKPVNILSGDYKDTESSDIVVITAGAAQKVGETRLQLINKNINIFKSIIPEVVKYNKDAILLVVSNPVDVLSYVTYKLSGFPKERVIGSGTVLDTSRLKHEIGKRYKIDPRNVNTYIMGEHGDSEIATWSVTNIQNIKIDEYANKENLEYNDNFRKEVYENVKNAAYEVINRKGATFYAIALAVTRIVKAILGDEKTILPVSTLVENYYGIKDVYLGMPCIVGGSGIEKALSIDLNKTEASKLVKSAETLKNTLNNASGL.

NAD(+) is bound by residues valine 18, aspartate 39, lysine 44, tyrosine 69, and 83 to 84; that span reads GA. 2 residues coordinate substrate: glutamine 86 and arginine 92. NAD(+)-binding positions include serine 105, 122-124, and serine 147; that span reads VSN. 124–127 contacts substrate; sequence NPVD. A substrate-binding site is contributed by 152–155; the sequence is DTSR. Histidine 179 (proton acceptor) is an active-site residue. Position 225 is a phosphotyrosine (tyrosine 225). Threonine 234 lines the substrate pocket.

It belongs to the LDH/MDH superfamily. LDH family. As to quaternary structure, homotetramer.

It is found in the cytoplasm. It carries out the reaction (S)-lactate + NAD(+) = pyruvate + NADH + H(+). Its pathway is fermentation; pyruvate fermentation to lactate; (S)-lactate from pyruvate: step 1/1. In terms of biological role, catalyzes the conversion of lactate to pyruvate. The chain is L-lactate dehydrogenase from Clostridium botulinum (strain Loch Maree / Type A3).